Consider the following 360-residue polypeptide: Popeye domain-containing protein 1 (360 aa).

Over 1–48 (MNYTESSPLRESTAIGFTPELESIIPVPSNKTTCENWREIHHLVFHVA) the chain is Extracellular. Residues asparagine 2 and asparagine 30 are each glycosylated (N-linked (GlcNAc...) asparagine). Residues 49 to 69 (NICFAVGLVIPTTLHLHMIFL) traverse the membrane as a helical segment. Residue arginine 70 is a topological domain, cytoplasmic. Residues 71 to 91 (GMLTLGCTLYIVWATLYRCAL) form a helical membrane-spanning segment. A topological domain (extracellular) is located at residue aspartate 92. Residues 93–113 (IMIWNSVFLGVNILHLSYLLY) form a helical membrane-spanning segment. A required for interaction with CAV3 region spans residues 93–115 (IMIWNSVFLGVNILHLSYLLYKK). The Cytoplasmic segment spans residues 114–360 (KKRPVKIEKE…PNTLKVHQLP (247 aa)). Positions 136 to 186 (RVPPDLFRRLTGQFCMIQTLKKGQTYAAEDKTSVDDRLSILLKGKMKVSYR) are required for interaction with KCNK2. Phosphoserine is present on residues serine 295 and serine 318. The tract at residues 317–360 (SSLHVSSPHQRASAKMKPIEEGAEDDDDVFEPASPNTLKVHQLP) is disordered. The span at 337–346 (EGAEDDDDVF) shows a compositional bias: acidic residues. Over residues 350–360 (SPNTLKVHQLP) the composition is skewed to polar residues.

Belongs to the popeye family. Homodimer. Homodimerization requires the C-terminus cytoplasmic region. Interacts (via the C-terminus cytoplasmic tail) with TJP1. Interacts (via the C-terminus cytoplasmic tail) with ARHGEF25/GEFT (via the DH domain). Interacts (via the C-terminus cytoplasmic tail) with VAMP3. Interacts with KCNK2; the interaction enhances KCNK2 surface expression and is inhibited by cAMP. Interacts with CAV3. In terms of tissue distribution, expressed in epithelial cells (at protein level). Expressed in fetal and adult heart and skeletal muscle.

The protein resides in the lateral cell membrane. It is found in the cell junction. Its subcellular location is the tight junction. It localises to the membrane. The protein localises to the cell membrane. The protein resides in the sarcolemma. It is found in the caveola. Functionally, cell adhesion molecule involved in the establishment and/or maintenance of cell integrity. Involved in the formation and regulation of the tight junction (TJ) paracellular permeability barrier in epithelial cells. Plays a role in VAMP3-mediated vesicular transport and recycling of different receptor molecules through its interaction with VAMP3. Plays a role in the regulation of cell shape and movement by modulating the Rho-family GTPase activity through its interaction with ARHGEF25/GEFT. Induces primordial adhesive contact and aggregation of epithelial cells in a Ca(2+)-independent manner. Also involved in striated muscle regeneration and repair and in the regulation of cell spreading. Important for the maintenance of cardiac function. Plays a regulatory function in heart rate dynamics mediated, at least in part, through cAMP-binding and, probably, by increasing cell surface expression of the potassium channel KCNK2 and enhancing current density. Is also a caveolae-associated protein important for the preservation of caveolae structural and functional integrity as well as for heart protection against ischemia injury. This is Popeye domain-containing protein 1 from Homo sapiens (Human).